The primary structure comprises 256 residues: MAFTLTNKNVVFVAGLGGIGLDTSKELVKRDLKNLVILDRIENPAAIAELKAINPKVTVTFYPYDVTVPIAETTKLLKTIFAQLKTIDVLINGAGILDDHQIERTIAVNYTGLVNTTTAILDFWDKRKGGPGGIICNIGSVTGFNAIYQVPVYSGTKAAVVNFTSSLAKLAPITGVTAYTVNPGITRTTLVHKFNSWLDVEPQVAEKLLAHPTQPSLACAQNFVKAIELNQNGAIWKLDLGTLEAIQWSKHWDSGI.

Residue 12 to 35 coordinates NAD(+); sequence FVAGLGGIGLDTSKELVKRDLKNL. Position 140 (serine 140) interacts with substrate. Residue tyrosine 153 is the Proton acceptor of the active site.

This sequence belongs to the short-chain dehydrogenases/reductases (SDR) family. As to quaternary structure, homodimer.

It carries out the reaction a primary alcohol + NAD(+) = an aldehyde + NADH + H(+). The catalysed reaction is a secondary alcohol + NAD(+) = a ketone + NADH + H(+). The chain is Alcohol dehydrogenase (Adh) from Drosophila yakuba (Fruit fly).